The chain runs to 484 residues: MNNFIEFDTSSLWIALPEIFLLSAIVIVLLIDLFLDKNFKQVTYYLIQLSLFITGLLAFNLIDHPQIIIFGGSFVLDNMASVFKVFMMAATMVAMVYSRHYLRTHSLFRGEYFVLVLLSVLGMMVMVSGYSLLTLYLGLEILSLSLYALIAIARERADAIEAALKYFVLGAIASGLLLYGMSMIYGISGSLNINDIASFASNTNLDSRETLIINFGLVFLVIGIAFKLGAVPFHMWVPDVYQGAPTSVTLFISTVPKIAAFAMLVRILVDGLDSMHAYWSDLFMVLSILSIALGSVVALMQSNIKRMLAYSTISHVGFIMLGFVAGTPIGYGAAAFYMLVYVLMSLAAFGMIILLNKQGFEIDQISDFKGLNKHAPWFALMMLIIILSMAGVPPLVGFYSKFFILQQVVSAGFITIAVIVVIFAVISAYYYLQIIKSMYFDETDKKITIYASIDIQLVLSINAILILAVGLFPDFWMKLALSLF.

The next 14 membrane-spanning stretches (helical) occupy residues Ser11 to Ile31, Val42 to Ile62, Met79 to Ser98, Phe113 to Leu133, Thr134 to Arg154, Phe167 to Ile187, Leu211 to Val231, Val248 to Leu268, Trp279 to Leu299, Ile313 to Ala333, Ala335 to Leu355, Phe378 to Phe398, Val408 to Ala428, and Leu457 to Met477.

Belongs to the complex I subunit 2 family. In terms of assembly, NDH-1 is composed of 14 different subunits. Subunits NuoA, H, J, K, L, M, N constitute the membrane sector of the complex.

It is found in the cell inner membrane. The catalysed reaction is a quinone + NADH + 5 H(+)(in) = a quinol + NAD(+) + 4 H(+)(out). NDH-1 shuttles electrons from NADH, via FMN and iron-sulfur (Fe-S) centers, to quinones in the respiratory chain. The immediate electron acceptor for the enzyme in this species is believed to be ubiquinone. Couples the redox reaction to proton translocation (for every two electrons transferred, four hydrogen ions are translocated across the cytoplasmic membrane), and thus conserves the redox energy in a proton gradient. The polypeptide is NADH-quinone oxidoreductase subunit N (Ruthia magnifica subsp. Calyptogena magnifica).